The following is a 356-amino-acid chain: UDP-3-O-acylglucosamine N-acyltransferase (356 aa).

Catalysis depends on histidine 242, which acts as the Proton acceptor.

Belongs to the transferase hexapeptide repeat family. LpxD subfamily. In terms of assembly, homotrimer.

It carries out the reaction a UDP-3-O-[(3R)-3-hydroxyacyl]-alpha-D-glucosamine + a (3R)-hydroxyacyl-[ACP] = a UDP-2-N,3-O-bis[(3R)-3-hydroxyacyl]-alpha-D-glucosamine + holo-[ACP] + H(+). Its pathway is bacterial outer membrane biogenesis; LPS lipid A biosynthesis. Functionally, catalyzes the N-acylation of UDP-3-O-acylglucosamine using 3-hydroxyacyl-ACP as the acyl donor. Is involved in the biosynthesis of lipid A, a phosphorylated glycolipid that anchors the lipopolysaccharide to the outer membrane of the cell. The protein is UDP-3-O-acylglucosamine N-acyltransferase of Acinetobacter baumannii (strain ACICU).